The chain runs to 71 residues: Large ribosomal subunit protein uL29 (71 aa).

Belongs to the universal ribosomal protein uL29 family.

This chain is Large ribosomal subunit protein uL29, found in Rickettsia canadensis (strain McKiel).